Here is a 235-residue protein sequence, read N- to C-terminus: High mobility group protein 1.2 (235 aa).

Over residues 1–34 (MNSGYSANIFPSSSSPTLYQSHQLQPNPSATMYQ) the composition is skewed to polar residues. The disordered stretch occupies residues 1-47 (MNSGYSANIFPSSSSPTLYQSHQLQPNPSATMYQATPRDMGKPPVRG). 2 consecutive DNA-binding regions (HMG box) follow at residues 47 to 117 (GKTS…AAYG) and 135 to 203 (PKRA…RNYK).

This sequence belongs to the HMGB family.

It localises to the nucleus. This is High mobility group protein 1.2 (hmg-1.2) from Caenorhabditis elegans.